Here is a 263-residue protein sequence, read N- to C-terminus: MLQPVWHACILAILGVFIFHVGEVRSQCWESNKCTDLSSEDGILECIKACKMDLSAESPVFPGNGHIQPLSENIRKYVMSHFRWNKFGRRNSTSNDNNNNNGGYKREDIANYPILNLFLGSDNQNTQEGIMEDDALDRQDSKRSYSMEHFRWGKPVGKKRRPIKVFPTDAEEESSESFPIELRRELSLEFDYPDTNSEEELDNGELLEGPVKKGRKYKMHHFRWEGPPKDKRYGGFMTPERSQTPLMTLFKNAIIKNAHKKGQ.

An N-terminal signal peptide occupies residues 1 to 26 (MLQPVWHACILAILGVFIFHVGEVRS). Q27 is subject to Pyrrolidone carboxylic acid. Phenylalanine amide is present on F87. The N-linked (GlcNAc...) asparagine glycan is linked to N91. A propeptide spanning residues 107 to 141 (EDIANYPILNLFLGSDNQNTQEGIMEDDALDRQDS) is cleaved from the precursor. Residue V156 is modified to Valine amide.

The protein belongs to the POMC family. Post-translationally, specific enzymatic cleavages at paired basic residues yield the different active peptides.

It is found in the secreted. Functionally, stimulates the adrenal glands to release cortisol. Anorexigenic peptide. Increases the pigmentation of skin by increasing melanin production in melanocytes. In terms of biological role, increases the pigmentation of skin by increasing melanin production in melanocytes. Its function is as follows. Endogenous orexigenic opiate. Functionally, endogenous opiate. The sequence is that of Pro-opiomelanocortin (pomc) from Aquarana catesbeiana (American bullfrog).